Consider the following 507-residue polypeptide: UDP-N-acetylhexosamine pyrophosphorylase-like protein 1 (507 aa).

The Substrate binding signature appears at 111–114; the sequence is LAGG. UTP is bound by residues 111–114, K125, Q199, and G225; that span reads LAGG. Substrate is bound at residue N226. D256 serves as a coordination point for UTP. A Substrate binding motif is present at residues 306–307; the sequence is EY. K380 is a UTP binding site. K410 serves as a coordination point for substrate.

The protein belongs to the UDPGP type 1 family.

This Mus musculus (Mouse) protein is UDP-N-acetylhexosamine pyrophosphorylase-like protein 1 (Uap1l1).